The following is a 139-amino-acid chain: Transcription antitermination protein NusB (139 aa).

Belongs to the NusB family.

Functionally, involved in transcription antitermination. Required for transcription of ribosomal RNA (rRNA) genes. Binds specifically to the boxA antiterminator sequence of the ribosomal RNA (rrn) operons. In Escherichia fergusonii (strain ATCC 35469 / DSM 13698 / CCUG 18766 / IAM 14443 / JCM 21226 / LMG 7866 / NBRC 102419 / NCTC 12128 / CDC 0568-73), this protein is Transcription antitermination protein NusB.